We begin with the raw amino-acid sequence, 518 residues long: Laccase (518 aa).

The first 21 residues, 1-21 (MSRFQSLLSFVLVSLAAVANA), serve as a signal peptide directing secretion. Plastocyanin-like domains lie at 23–148 (IGPV…FVVY) and 160–302 (IDND…ILRY). Asparagine 72 and asparagine 75 each carry an N-linked (GlcNAc...) asparagine glycan. Residues histidine 85, histidine 87, histidine 130, and histidine 132 each contribute to the Cu cation site. Intrachain disulfides connect cysteine 106-cysteine 507 and cysteine 138-cysteine 226. Asparagine 229 carries an N-linked (GlcNAc...) asparagine glycan. The segment at 308 to 330 (VEPTTTQTTSTKPLNEADLHPLT) is disordered. N-linked (GlcNAc...) asparagine glycosylation is found at asparagine 354, asparagine 362, and asparagine 398. Positions 369-489 (SVPVLLQILS…AGFAVVLAED (121 aa)) constitute a Plastocyanin-like 3 domain. Positions 416, 419, 421, 471, 472, 473, and 477 each coordinate Cu cation.

Belongs to the multicopper oxidase family. Cu cation is required as a cofactor.

The protein resides in the secreted. It carries out the reaction 4 hydroquinone + O2 = 4 benzosemiquinone + 2 H2O. In terms of biological role, lignin degradation and detoxification of lignin-derived products. Cleaves the C-C and C-O bonds of some phenolic lignin model compounds (such as O- and P-quinols, aminophenols and phenylenediamine). May also be involved in synthesis of phenoxazinone pigments. The chain is Laccase (LCC3-1) from Pycnoporus cinnabarinus (Cinnabar-red polypore).